The primary structure comprises 1274 residues: MAEPAARHLSLPSGLLELCALLGASQDSLRGLEQIAQKRGVKSASSLVPEVLSVFVPPFTTKEDGQVPGASCALGKGRRRSFRKKREKPRMEPWKSHPGDSKGPDSEDVTIPGGVDLLALPQLCFPGCVCVASEPKEDYIHFLVLTDVCGNRTYGVVAQYYRPLHDEYCFYNGKSHWEPSVISARCFVPFAVCVVSRFPYYNSLKDCLSCLLTHLKLCKDFEVDNHIKDFAARLSLIPSPPPGPLHLIFNMKPLQVVFPSRADPESPIVDLDLHLPLLCFRPEKVLQILTCILTEQRIVFFSSDWALLTLMAECFVAYLHPLQWQHTFVPILSGQMLDFVMAPTSFLMGCHLDHFEEVRKEADGLVLIDIDHGSVTCSKSSDDNIDIPDVPLLLAQTFIQRVQSLQLHPDLHLAHLSASTDLNEGRARRRAWQQTLNCKIQHITLQLLVGIFREVKNHLNYEHRVFNSEEFLKTRAAGDQQFYKQVLDTYMFHSFLKARLNGRMDAFARMDLDTQSEEDRIDRMLISPRRPTVEKMASRKASPLHITHRRMVVSMPNLQDISLPELPPRNSSLRIMDTSNCRSSSPVLKVTPKSTYMFKIPDIHFPLESQCVQAYYTDFVTLLSKAMALLGPGDSLLLARYFYLRGLLHLMQGQLLSALLDFQNLYKTDIGIFPADLVKRTVESMSASERAQAERTPELRRLITEVFDKHGEAPKADDAVKNFELPKKHMQLNDFVKRVQESGIVKDAVIIHRLFDALTFGHEKQIDPETFRDFYTCWKETEAEAQEVSLPALLMEHLDKNECVYKLSSSVKTNRGVGKIAMTQKRLFLLTEGRPGYVEIATFRNIEEVKNSTVAFLLLRIPTLKIKTVAKKEVFEANLKSECDLWHLMVKEMWAGKQLADDHKDPQYVQQALTNVLLMDAVVGTLQSPSAIHAASKLAYFDNMKKKSPMAVPKTTSETLKHKINPSAGETAPQAIEVLLYTPGRLDPAEKVEDAHPKLWCALNEGKVVVFDASSWTVHQHCFKVGSSKVNCMVMAEHNQVWVGSEDSVIYIINVHSMSCNKQLTDHRSPVTGLAVHNGKKPSEIYSCSLDGTVIAWNVSTLRVISRFQLSYGDLLSISLHNDRIWCCTVHKILVVTPQGFVRQELKHPKDASFLAFQLLPEEQQLWAASTGVSELYMWSLKDLDQPPQKTYLQDCSEVTCMIRVKRQIWVGGRGLSQGKTRGKIYVMDVEKVTVEKELVAHLDTVRTLCSAEDRYVLSGAGQEEGKIAIWKVE.

The disordered stretch occupies residues 65-108 (GQVPGASCALGKGRRRSFRKKREKPRMEPWKSHPGDSKGPDSED). A uDENN domain is found at 75-245 (GKGRRRSFRK…LIPSPPPGPL (171 aa)). A compositionally biased stretch (basic residues) spans 76-88 (KGRRRSFRKKREK). Over residues 89 to 105 (PRMEPWKSHPGDSKGPD) the composition is skewed to basic and acidic residues. Residues 268–400 (IVDLDLHLPL…PLLLAQTFIQ (133 aa)) form the cDENN domain. A dDENN domain is found at 402-506 (VQSLQLHPDL…KARLNGRMDA (105 aa)). The tract at residues 520 to 970 (RIDRMLISPR…KHKINPSAGE (451 aa)) is linker. 2 positions are modified to phosphoserine; by ULK1: Ser-554 and Ser-572. A Phosphotyrosine modification is found at Tyr-940. WD repeat units lie at residues 975-1013 (AIEV…VFDA), 1019-1055 (HQHC…IINV), 1059-1099 (SCNK…AWNV), 1103-1140 (RVIS…TPQG), 1146-1181 (LKHP…MWSL), 1186-1228 (QPPQ…IYVM), and 1234-1273 (TVEK…IWKV).

Forms oligomers. Interacts with 6 of the 7 known isoforms of 14-3-3 proteins.

The protein localises to the cytoplasm. Guanine nucleotide exchange factor (GEF) activating Rab12. Promotes the exchange of GDP to GTP, converting inactive GDP-bound Rab12 into its active GTP-bound form. Regulates autophagy in response to starvation through Rab12 activation. Starvation leads to ULK1/2-dependent phosphorylation of Ser-554 and Ser-572, which in turn allows recruitment of 14-3-3 adapter proteins and leads to up-regulation of GEF activity towards Rab12. Also plays a role in protein transport from recycling endosomes to lysosomes, regulating, for instance, the degradation of the transferrin receptor and of the amino acid transporter PAT4. Starvation also induces phosphorylation at Tyr-940, which leads to up-regulated GEF activity and initiates autophagy. The chain is DENN domain-containing protein 3 (Dennd3) from Mus musculus (Mouse).